The sequence spans 776 residues: MGRGSGTFERLLDKATSQLLLETDWESILQICDLIRQGDTQAKYAVNSIKKKVNDKNPHVALYALEVMESVVKNCGQTVHDEVANKQTMEELKELLKRQVEVNVRNKILYLIQAWAHAFRNEPKYKVVQDTYQIMKVEGHVFPEFKESDAMFAAERAPDWVDAEECHRCRVQFGVVTRKHHCRACGQIFCGKCSSKYSTIPKFGIEKEVRVCEPCYEQLNKKAEGKAASTTELPPEYLTSPLSQQSQLPPKRDETALQEEEELQLALALSQSEAEEKERMRQKSTYTAHPKSEPAPLASSAPPAGSLYSSPVNSSAPLAEDIDPELARYLNRNYWEKKQEEARKSPTPSAPVPLTEPAAQPGEGHTAPNSMVEAPLPETDSQPITSCSGPFSEQYQNGESEESHEQFLKALQNAVSTFVNRMKSNHMRGRSITNDSAVLSLFQSINSTHPQLLELLNRLDERRLYYEGLQDKLAQIRDARGALSALREEHREKLRRAAEEAERQRQIQLAQKLEIMRQKKQEYLEVQRQLAIQRLQEQEKERQMRLEQQKQTVQMRAQMPAFPLPYAQLQAMPTAGGVLYQPSGPTSFPGTFSPAGSVEGSPMHGVYMSQPAPATGPYPSMPGTTADPSMVSAYMYPAGAPGAQAAPQAQAGPTTNPAYSSYQPTPTPGYQNVASQAPQSLPAISQPPQTSNIGYMGSQPMSMGYQPYNMQNLMTTLPGQDASLPAQQPYITGQQPMYQQMAPSTGPPQQQPPVAQPPPTQGPPAQGNETQLISFD.

The VHS domain occupies Ala-15–Pro-143. The FYVE-type zinc finger occupies Trp-160–Asn-220. 6 residues coordinate Zn(2+): Cys-166, Cys-169, Cys-182, Cys-185, Cys-190, and Cys-193. Lys-207 is modified (N6-acetyllysine). Zn(2+) contacts are provided by Cys-212 and Cys-215. Tyr-216 bears the Phosphotyrosine mark. Positions Ala-223–Ala-319 are disordered. An interaction with SNX1 region spans residues Gly-225–Arg-542. Positions Gln-258 to Lys-277 constitute a UIM domain. Residues Pro-294–Pro-311 show a composition bias toward low complexity. Phosphotyrosine is present on residues Tyr-308, Tyr-329, and Tyr-334. The disordered stretch occupies residues Lys-338–Glu-401. Over residues Thr-379–Gly-398 the composition is skewed to polar residues. The tract at residues Ser-444–Arg-542 is interaction with SNAP25 and TRAK2. Residues Leu-453–Ala-571 are interaction with STAM. The tract at residues Ala-479–Asp-776 is interaction with NF2. Position 550 is an N6-succinyllysine (Lys-550). A disordered region spans residues Gly-719–Asp-776. Over residues Pro-725–Pro-743 the composition is skewed to polar residues. Residues Thr-745 to Gly-762 are compositionally biased toward pro residues. The segment covering Gly-767–Asp-776 has biased composition (polar residues).

In terms of assembly, component of the ESCRT-0 complex composed of STAM or STAM2 and HGS. Part of a complex at least composed of HSG, STAM2 (or probably STAM) and EPS15. Interacts with STAM. Interacts with STAM2. Interacts with EPS15; the interaction is direct, calcium-dependent and inhibited by SNAP25. Identified in a complex with STAM and LITAF. Found in a complex with STAM and E3 ligase ITCH and DTX3L. Interacts with E3 ligase DTX3L; the interaction brings together STAM and HSG, promotes their recruitment to early endosomes and decreases STAM and HGS ubiquitination by ITCH. Interacts with NF2; the interaction is direct. Interacts with ubiquitin; the interaction is direct. Interacts with VPS37C. Interacts with SMAD1, SMAD2 and SMAD3. Interacts with TSG101; the interaction mediates the association with the ESCRT-I complex. Interacts with SNAP25; the interaction is direct and decreases with addition of increasing concentrations of free calcium. Interacts with SNX1; the interaction is direct. Component of a 550 kDa membrane complex at least composed of HGS and SNX1 but excluding EGFR. Interacts with TRAK2. Interacts with TRAK1. Component of the CART complex, at least composed of ACTN4, HGS/HRS, MYO5B and TRIM3. Interacts (via UIM domain) with UBQLN1 (via ubiquitin-like domain). Interacts with ARRDC3. Identified in a complex containing at least ARRDC4, AVPR2 and HGS. Interacts with LAPTM4B; promotes HGS ubiquitination. In terms of processing, phosphorylated on Tyr-334. This phosphorylation occurs in response to EGF. A minor site of phosphorylation on Tyr-329 is detected. Protein phosphorylation may also be triggered in response to IL-2, GM-CSF and HGF. Post-translationally, ubiquitinated by ITCH. In terms of tissue distribution, ubiquitously expressed.

It localises to the cytoplasm. It is found in the early endosome membrane. Its subcellular location is the endosome. The protein resides in the multivesicular body membrane. Involved in intracellular signal transduction mediated by cytokines and growth factors. When associated with STAM, it suppresses DNA signaling upon stimulation by IL-2 and GM-CSF. Could be a direct effector of PI3-kinase in vesicular pathway via early endosomes and may regulate trafficking to early and late endosomes by recruiting clathrin. May concentrate ubiquitinated receptors within clathrin-coated regions. Involved in down-regulation of receptor tyrosine kinase via multivesicular body (MVBs) when complexed with STAM (ESCRT-0 complex). The ESCRT-0 complex binds ubiquitin and acts as a sorting machinery that recognizes ubiquitinated receptors and transfers them to further sequential lysosomal sorting/trafficking processes. Involved in receptor recycling via its association with the CART complex, a multiprotein complex required for efficient transferrin receptor recycling but not for EGFR degradation. May contribute to the efficient recruitment of SMADs to the activin receptor complex. The protein is Hepatocyte growth factor-regulated tyrosine kinase substrate (Hgs) of Rattus norvegicus (Rat).